A 265-amino-acid chain; its full sequence is Phosphatidylglycerol--prolipoprotein diacylglyceryl transferase (265 aa).

Transmembrane regions (helical) follow at residues 17–37, 56–76, 92–112, and 117–137; these read LSIRWYGLMYLIGFAAAWLLG, LVTYMVLGVVVGGRLGYMLFY, WQGGMSFHGGFLGVLAVVWFF, and GKGFWGVADFTAPLAPFGLFA. Arg139 provides a ligand contact to a 1,2-diacyl-sn-glycero-3-phospho-(1'-sn-glycerol). A run of 3 helical transmembrane segments spans residues 173–193, 201–221, and 235–255; these read PSQLYEALLEGAALFLIVWLY, GAVSGVFCVCYGLFRFAVELV, and WLTMGQLLSLPVIVFGLWLLA.

Belongs to the Lgt family.

The protein resides in the cell inner membrane. The catalysed reaction is L-cysteinyl-[prolipoprotein] + a 1,2-diacyl-sn-glycero-3-phospho-(1'-sn-glycerol) = an S-1,2-diacyl-sn-glyceryl-L-cysteinyl-[prolipoprotein] + sn-glycerol 1-phosphate + H(+). It participates in protein modification; lipoprotein biosynthesis (diacylglyceryl transfer). In terms of biological role, catalyzes the transfer of the diacylglyceryl group from phosphatidylglycerol to the sulfhydryl group of the N-terminal cysteine of a prolipoprotein, the first step in the formation of mature lipoproteins. The polypeptide is Phosphatidylglycerol--prolipoprotein diacylglyceryl transferase (Solidesulfovibrio magneticus (strain ATCC 700980 / DSM 13731 / RS-1) (Desulfovibrio magneticus)).